We begin with the raw amino-acid sequence, 469 residues long: Glutamine synthetase (469 aa).

The region spanning Asn13–Thr97 is the GS beta-grasp domain. In terms of domain architecture, GS catalytic spans Pro105 to Val469. Residues Glu130 and Glu132 each contribute to the Mg(2+) site. Residue Glu208 participates in ATP binding. Positions 213 and 221 each coordinate Mg(2+). Residues Asn265–Gly266 and Gly266 contribute to the L-glutamate site. His270 is a binding site for Mg(2+). ATP is bound by residues His272–Ser274 and Ser274. Positions 322, 328, and 340 each coordinate L-glutamate. Residues Arg340, Arg345, and Lys353 each contribute to the ATP site. Residue Glu358 participates in Mg(2+) binding. Position 360 (Arg360) interacts with L-glutamate. Position 398 is an O-AMP-tyrosine (Tyr398).

The protein belongs to the glutamine synthetase family. Oligomer of 12 subunits arranged in the form of two hexameric ring. It depends on Mg(2+) as a cofactor.

It is found in the cytoplasm. It carries out the reaction L-glutamate + NH4(+) + ATP = L-glutamine + ADP + phosphate + H(+). The activity of this enzyme could be controlled by adenylation under conditions of abundant glutamine. Catalyzes the ATP-dependent biosynthesis of glutamine from glutamate and ammonia. In Vibrio cholerae serotype O1 (strain ATCC 39315 / El Tor Inaba N16961), this protein is Glutamine synthetase (glnAv).